The primary structure comprises 327 residues: Glutaminase (327 aa).

Substrate is bound by residues Ser-92, Asn-143, Asn-195, Tyr-218, Tyr-263, and Val-281.

It belongs to the glutaminase family. In terms of assembly, homotetramer.

It carries out the reaction L-glutamine + H2O = L-glutamate + NH4(+). This is Glutaminase from Synechocystis sp. (strain ATCC 27184 / PCC 6803 / Kazusa).